The following is a 242-amino-acid chain: Small ribosomal subunit protein uS2 (242 aa).

This sequence belongs to the universal ribosomal protein uS2 family.

The protein is Small ribosomal subunit protein uS2 of Neisseria meningitidis serogroup B (strain ATCC BAA-335 / MC58).